We begin with the raw amino-acid sequence, 159 residues long: H/ACA ribonucleoprotein complex subunit 2-like protein (159 aa).

The tract at residues 1-28 is disordered; the sequence is MAKTPKKDKTEEKEEHEESGGNKEDRER.

This sequence belongs to the eukaryotic ribosomal protein eL8 family. Component of the small nucleolar ribonucleoprotein particle containing H/ACA-type snoRNAs (H/ACA snoRNPs). Component of the telomerase holoenzyme complex.

The protein localises to the nucleus. Its subcellular location is the nucleolus. Functionally, required for ribosome biogenesis. Part of a complex which catalyzes pseudouridylation of rRNA. This involves the isomerization of uridine such that the ribose is subsequently attached to C5, instead of the normal N1. Pseudouridine ('psi') residues may serve to stabilize the conformation of rRNAs. The protein is H/ACA ribonucleoprotein complex subunit 2-like protein of Branchiostoma belcheri (Amphioxus).